We begin with the raw amino-acid sequence, 87 residues long: U3-theraphotoxin-Hhn1p (87 aa).

Residues 1–24 (MVNMKASMFLTFAGLVLLFVVCYA) form the signal peptide. The propeptide occupies 25–52 (SESEEKEFPKEMLSSIFAVDNDFKQEER). 3 cysteine pairs are disulfide-bonded: C54–C67, C61–C72, and C66–C79.

The protein belongs to the neurotoxin 10 (Hwtx-1) family. 51 (Hntx-8) subfamily. Hntx-8 sub-subfamily. As to expression, expressed by the venom gland.

It localises to the secreted. Its function is as follows. Ion channel inhibitor. The polypeptide is U3-theraphotoxin-Hhn1p (Cyriopagopus hainanus (Chinese bird spider)).